Reading from the N-terminus, the 141-residue chain is MSVKKVIKIIKLQIPGGKANPAPPIGPALGAAGVNIMGFCKEFNAATQDKPGDLLPVVITVYADKTFTFITKQPPVSSLIKKTLNLESGSKIPNRNKVGKLTQAQVEAIAEQKMKDMDIVLLESAKRMVEGTARSMGIDVE.

The protein belongs to the universal ribosomal protein uL11 family. In terms of assembly, part of the ribosomal stalk of the 50S ribosomal subunit. Interacts with L10 and the large rRNA to form the base of the stalk. L10 forms an elongated spine to which L12 dimers bind in a sequential fashion forming a multimeric L10(L12)X complex. One or more lysine residues are methylated.

Functionally, forms part of the ribosomal stalk which helps the ribosome interact with GTP-bound translation factors. The polypeptide is Large ribosomal subunit protein uL11 (Chlamydia pneumoniae (Chlamydophila pneumoniae)).